We begin with the raw amino-acid sequence, 380 residues long: Queuine tRNA-ribosyltransferase (380 aa).

Catalysis depends on Asp-96, which acts as the Proton acceptor. Substrate contacts are provided by residues 96-100, Asp-150, Gln-193, and Gly-220; that span reads DSGGF. The segment at 251–257 is RNA binding; that stretch reads GVGAPDS. Asp-270 (nucleophile) is an active-site residue. Residues 275-279 are RNA binding; important for wobble base 34 recognition; the sequence is TRIAR. 4 residues coordinate Zn(2+): Cys-308, Cys-310, Cys-313, and His-339.

The protein belongs to the queuine tRNA-ribosyltransferase family. Homodimer. Within each dimer, one monomer is responsible for RNA recognition and catalysis, while the other monomer binds to the replacement base PreQ1. The cofactor is Zn(2+).

The enzyme catalyses 7-aminomethyl-7-carbaguanine + guanosine(34) in tRNA = 7-aminomethyl-7-carbaguanosine(34) in tRNA + guanine. Its pathway is tRNA modification; tRNA-queuosine biosynthesis. Its function is as follows. Catalyzes the base-exchange of a guanine (G) residue with the queuine precursor 7-aminomethyl-7-deazaguanine (PreQ1) at position 34 (anticodon wobble position) in tRNAs with GU(N) anticodons (tRNA-Asp, -Asn, -His and -Tyr). Catalysis occurs through a double-displacement mechanism. The nucleophile active site attacks the C1' of nucleotide 34 to detach the guanine base from the RNA, forming a covalent enzyme-RNA intermediate. The proton acceptor active site deprotonates the incoming PreQ1, allowing a nucleophilic attack on the C1' of the ribose to form the product. After dissociation, two additional enzymatic reactions on the tRNA convert PreQ1 to queuine (Q), resulting in the hypermodified nucleoside queuosine (7-(((4,5-cis-dihydroxy-2-cyclopenten-1-yl)amino)methyl)-7-deazaguanosine). This Streptococcus pneumoniae (strain Hungary19A-6) protein is Queuine tRNA-ribosyltransferase.